Here is a 533-residue protein sequence, read N- to C-terminus: Tyrosinase (533 aa).

Residues 1 to 18 (MFLAVLYCLLWSFQISDG) form the signal peptide. Over 19–476 (HFPRACASSK…YLEQASRIWP (458 aa)) the chain is Lumenal, melanosome. N-linked (GlcNAc...) asparagine glycosylation is found at Asn-86, Asn-111, and Asn-161. Residues His-180, His-202, and His-211 each coordinate Cu cation. Residues Asn-230 and Asn-337 are each glycosylated (N-linked (GlcNAc...) asparagine). 2 residues coordinate Cu cation: His-363 and His-367. The N-linked (GlcNAc...) asparagine glycan is linked to Asn-371. A Cu cation-binding site is contributed by His-390. A helical membrane pass occupies residues 477–497 (WLLGAALVGAVIAAALSGLSS). At 498 to 533 (RLCLQKKKKKKQPQEERQPLLMDKDDYHSLLYQSHL) the chain is on the cytoplasmic side.

This sequence belongs to the tyrosinase family. As to quaternary structure, forms an OPN3-dependent complex with DCT in response to blue light in melanocytes. Cu(2+) is required as a cofactor. Post-translationally, glycosylated. In terms of tissue distribution, expressed in the skin.

Its subcellular location is the melanosome membrane. The protein resides in the melanosome. The enzyme catalyses 2 L-dopa + O2 = 2 L-dopaquinone + 2 H2O. The catalysed reaction is L-tyrosine + O2 = L-dopaquinone + H2O. It carries out the reaction 2 5,6-dihydroxyindole-2-carboxylate + O2 = 2 indole-5,6-quinone-2-carboxylate + 2 H2O. In terms of biological role, this is a copper-containing oxidase that functions in the formation of pigments such as melanins and other polyphenolic compounds. Catalyzes the initial and rate limiting step in the cascade of reactions leading to melanin production from tyrosine. In addition to hydroxylating tyrosine to DOPA (3,4-dihydroxyphenylalanine), also catalyzes the oxidation of DOPA to DOPA-quinone, and possibly the oxidation of DHI (5,6-dihydroxyindole) to indole-5,6 quinone. The polypeptide is Tyrosinase (Tyr) (Mus musculus (Mouse)).